The chain runs to 311 residues: 4-diphosphocytidyl-2-C-methyl-D-erythritol kinase (311 aa).

K16 is an active-site residue. 101–111 lines the ATP pocket; that stretch reads PVAGGMAGGSA. D143 is a catalytic residue.

Belongs to the GHMP kinase family. IspE subfamily.

The enzyme catalyses 4-CDP-2-C-methyl-D-erythritol + ATP = 4-CDP-2-C-methyl-D-erythritol 2-phosphate + ADP + H(+). Its pathway is isoprenoid biosynthesis; isopentenyl diphosphate biosynthesis via DXP pathway; isopentenyl diphosphate from 1-deoxy-D-xylulose 5-phosphate: step 3/6. Functionally, catalyzes the phosphorylation of the position 2 hydroxy group of 4-diphosphocytidyl-2C-methyl-D-erythritol. This is 4-diphosphocytidyl-2-C-methyl-D-erythritol kinase from Rhodococcus jostii (strain RHA1).